The following is a 490-amino-acid chain: Betaine aldehyde dehydrogenase (490 aa).

K(+) is bound by residues Thr-26, Ile-27, and Asp-93. 150 to 152 (GAW) is an NAD(+) binding site. Residue Lys-162 is the Charge relay system of the active site. 176–179 (KPSE) lines the NAD(+) pocket. Val-180 is a binding site for K(+). 230-233 (GVAS) lines the NAD(+) pocket. Leu-246 contributes to the K(+) binding site. Glu-252 serves as the catalytic Proton acceptor. Positions 254, 286, and 387 each coordinate NAD(+). Residue Cys-286 is the Nucleophile of the active site. Cys-286 is subject to Cysteine sulfenic acid (-SOH). 2 residues coordinate K(+): Lys-457 and Gly-460. Glu-464 functions as the Charge relay system in the catalytic mechanism.

It belongs to the aldehyde dehydrogenase family. In terms of assembly, dimer of dimers. K(+) is required as a cofactor.

It carries out the reaction betaine aldehyde + NAD(+) + H2O = glycine betaine + NADH + 2 H(+). It participates in amine and polyamine biosynthesis; betaine biosynthesis via choline pathway; betaine from betaine aldehyde: step 1/1. In terms of biological role, involved in the biosynthesis of the osmoprotectant glycine betaine. Catalyzes the irreversible oxidation of betaine aldehyde to the corresponding acid. In Klebsiella pneumoniae (strain 342), this protein is Betaine aldehyde dehydrogenase.